A 635-amino-acid chain; its full sequence is 1-deoxy-D-xylulose-5-phosphate synthase (635 aa).

Thiamine diphosphate-binding positions include His-72 and 113–115; that span reads GHA. Asp-144 is a binding site for Mg(2+). Residues 145-146, Asn-174, Tyr-287, and Glu-370 contribute to the thiamine diphosphate site; that span reads GA. A Mg(2+)-binding site is contributed by Asn-174.

It belongs to the transketolase family. DXPS subfamily. In terms of assembly, homodimer. The cofactor is Mg(2+). Thiamine diphosphate is required as a cofactor.

It carries out the reaction D-glyceraldehyde 3-phosphate + pyruvate + H(+) = 1-deoxy-D-xylulose 5-phosphate + CO2. It functions in the pathway metabolic intermediate biosynthesis; 1-deoxy-D-xylulose 5-phosphate biosynthesis; 1-deoxy-D-xylulose 5-phosphate from D-glyceraldehyde 3-phosphate and pyruvate: step 1/1. Functionally, catalyzes the acyloin condensation reaction between C atoms 2 and 3 of pyruvate and glyceraldehyde 3-phosphate to yield 1-deoxy-D-xylulose-5-phosphate (DXP). The chain is 1-deoxy-D-xylulose-5-phosphate synthase from Trichormus variabilis (strain ATCC 29413 / PCC 7937) (Anabaena variabilis).